An 81-amino-acid polypeptide reads, in one-letter code: Putative defensin-like protein 265 (81 aa).

A signal peptide spans 1–26; sequence MEKTVSRKVVVLAILLSLSCLCIAKA. Intrachain disulfides connect Cys48–Cys66, Cys54–Cys71, and Cys58–Cys73.

This sequence belongs to the DEFL family.

The protein localises to the secreted. This chain is Putative defensin-like protein 265, found in Arabidopsis thaliana (Mouse-ear cress).